The sequence spans 552 residues: Putative transport protein YE4162 (552 aa).

6 helical membrane passes run 1-21 (MSAI…GLWI), 26-46 (VYGV…VGHF), 65-85 (FGLI…FFSS), 96-116 (FAIL…KLFA), 119-139 (LPII…LGAA), and 158-178 (MGYA…MWLI). RCK C-terminal domains lie at 192–276 (EFDS…VVGE) and 279–361 (DVTL…VVGN). 6 helical membrane-spanning segments follow: residues 371–391 (MLPV…PLFI), 393–413 (GFPA…ALIL), 439–459 (IVLF…NTLV), 464–484 (LAWI…VGIL), 493–513 (YLTL…LAFA), and 530–550 (VYPL…VLFW).

It belongs to the AAE transporter (TC 2.A.81) family. YidE subfamily.

Its subcellular location is the cell membrane. This chain is Putative transport protein YE4162, found in Yersinia enterocolitica serotype O:8 / biotype 1B (strain NCTC 13174 / 8081).